A 941-amino-acid polypeptide reads, in one-letter code: Isoleucine--tRNA ligase (941 aa).

The 'HIGH' region signature appears at 58-68 (PYANGNIHLGH). Position 564 (Glu-564) interacts with L-isoleucyl-5'-AMP. The short motif at 605–609 (KMSKS) is the 'KMSKS' region element. Residue Lys-608 coordinates ATP. Residues Cys-904, Cys-907, Cys-924, and Cys-927 each coordinate Zn(2+).

It belongs to the class-I aminoacyl-tRNA synthetase family. IleS type 1 subfamily. In terms of assembly, monomer. Requires Zn(2+) as cofactor.

It is found in the cytoplasm. It carries out the reaction tRNA(Ile) + L-isoleucine + ATP = L-isoleucyl-tRNA(Ile) + AMP + diphosphate. In terms of biological role, catalyzes the attachment of isoleucine to tRNA(Ile). As IleRS can inadvertently accommodate and process structurally similar amino acids such as valine, to avoid such errors it has two additional distinct tRNA(Ile)-dependent editing activities. One activity is designated as 'pretransfer' editing and involves the hydrolysis of activated Val-AMP. The other activity is designated 'posttransfer' editing and involves deacylation of mischarged Val-tRNA(Ile). This Hahella chejuensis (strain KCTC 2396) protein is Isoleucine--tRNA ligase.